The chain runs to 289 residues: Serine/threonine-protein phosphatase Pgam5, mitochondrial (289 aa).

A helical membrane pass occupies residues 7–23 (FACGTGAGLLTFYLTKL).

It belongs to the phosphoglycerate mutase family. BPG-dependent PGAM subfamily. Interacts with Pk92B/ASK1.

The protein localises to the mitochondrion outer membrane. The enzyme catalyses O-phospho-L-seryl-[protein] + H2O = L-seryl-[protein] + phosphate. The catalysed reaction is O-phospho-L-threonyl-[protein] + H2O = L-threonyl-[protein] + phosphate. Its function is as follows. Displays phosphatase activity for serine/threonine residues, and dephosphorylates and activates Pk92B kinase. Has apparently no phosphoglycerate mutase activity. In Drosophila pseudoobscura pseudoobscura (Fruit fly), this protein is Serine/threonine-protein phosphatase Pgam5, mitochondrial (Pgam5).